Reading from the N-terminus, the 103-residue chain is Small ribosomal subunit protein uS10 (103 aa).

It belongs to the universal ribosomal protein uS10 family. In terms of assembly, part of the 30S ribosomal subunit.

In terms of biological role, involved in the binding of tRNA to the ribosomes. The protein is Small ribosomal subunit protein uS10 of Chlorobium chlorochromatii (strain CaD3).